The following is an 889-amino-acid chain: F-BAR domain only protein 1 (889 aa).

In terms of domain architecture, F-BAR spans 1–248 (MSYFGEHFWG…NIENVSVEML (248 aa)). The mediates membrane-binding stretch occupies residues 1 to 275 (MSYFGEHFWG…LDFEAYSAAA (275 aa)). The stretch at 156–195 (TSQKEMDKAETKTKKAAESLRRSVEKYNSARADFEQKMLD) forms a coiled coil. The segment at 267 to 442 (DFEAYSAAAL…KNLFGPPLES (176 aa)) is mediates interaction with the adaptor protein complex AP-2. Positions 294 to 352 (LSRREREPEPPAAVDFLEPDSGTCPEVDEEGFTVRPDVTQNSTAEPSRFSSSDSDFDDE) are disordered. 3 positions are modified to phosphoserine: Ser-295, Ser-347, and Ser-372. Positions 382-596 (ATAGSLILPP…SPLGSSAAST (215 aa)) are disordered. Low complexity predominate over residues 450–469 (TGSSSLGFTSSPSPFSSSSP). Pro residues predominate over residues 496–511 (PGTPQSPPSCRAPPPE). Ser-530 carries the post-translational modification Phosphoserine. Over residues 580 to 596 (LSRSLSPSPLGSSAAST) the composition is skewed to low complexity. The tract at residues 609 to 889 (HGVSRGPSPV…FATGMYLVSC (281 aa)) is mediates interaction with AGFG1, CALM, DAB2, EPS15, EPS15R, ITSN1 and clathrin. Phosphoserine is present on Ser-616. The region spanning 625 to 888 (ALPIATAFTE…RFATGMYLVS (264 aa)) is the MHD domain. The disordered stretch occupies residues 826-849 (AGGSGRLSASWEPLSGPSTPSPVA).

It belongs to the FCHO family. In terms of assembly, may oligomerize and form homotetramer. Interacts with AP2A2 and AP2B1; 2 subunits of the adaptor protein complex AP-2. Interacts with DAB2. Interacts with clathrin (CLTC or CLTCL1). Interacts with EPS15, EPS15R and ITSN1. Interacts with AGFG1 and CALM. May interact with ACVR1; linking this receptor to clathrin-mediated endocytosis. In terms of tissue distribution, predominantly expressed in lymphoid cells.

The protein localises to the membrane. It is found in the clathrin-coated pit. Functionally, functions in an early step of clathrin-mediated endocytosis. Has both a membrane binding/bending activity and the ability to recruit proteins essential to the formation of functional clathrin-coated pits. May regulate Bmp signaling by regulating clathrin-mediated endocytosis of Bmp receptors. Involved in the regulation of T-cell poliferation and activation. Affects TCR clustering upon receptor triggering and modulates its internalisation, playing a role in TCR-dependent T-cell activation. This chain is F-BAR domain only protein 1, found in Homo sapiens (Human).